The sequence spans 520 residues: Putative cytochrome P450 CYP13A3 (520 aa).

Cysteine 464 is a heme binding site.

The protein belongs to the cytochrome P450 family. Heme is required as a cofactor.

Its function is as follows. Cytochromes P450 are a group of heme-thiolate monooxygenases. They oxidize a variety of structurally unrelated compounds, including steroids, fatty acids, and xenobiotics. The chain is Putative cytochrome P450 CYP13A3 (cyp-13A3) from Caenorhabditis elegans.